The primary structure comprises 239 residues: Lactate utilization protein A (239 aa).

It belongs to the LutA/YkgE family.

Is involved in L-lactate degradation and allows cells to grow with lactate as the sole carbon source. In Geobacillus thermodenitrificans (strain NG80-2), this protein is Lactate utilization protein A.